The primary structure comprises 148 residues: Ergosterol biosynthetic protein 28 (148 aa).

The Cytoplasmic segment spans residues 1-25; that stretch reads MFSLQDVITTTKTTLAAMPKGYLPK. The chain crosses the membrane as a helical span at residues 26–46; it reads WLLFISIVSVFNSIQTYVSGL. Topologically, residues 47 to 92 are lumenal; the sequence is ELTRKVYERKPTETTHLSARTFGTWTFISCVIRFYGAMYLNEPHIF. Residues 93 to 113 traverse the membrane as a helical segment; that stretch reads ELVFMSYMVALFHFGSELLIF. Over 114–120 the chain is Cytoplasmic; the sequence is RTCKLGK. Residues 121-136 form a helical membrane-spanning segment; that stretch reads GFMGPLVVSTTSLVWM. The Lumenal segment spans residues 137-148; it reads YKQREYYTGVAW.

Belongs to the ERG28 family. As to quaternary structure, heterotetramer of ERG25, ERG26, ERG27 and ERG28. ERG28 acts as a scaffold to tether ERG27 and other 4,4-demethylation-related enzymes, forming a demethylation enzyme complex, in the endoplasmic reticulum. Interacts with ERG25, ERG26 and ERG27. Also interacts with ERG1, ERG3, ERG5, ERG6 and ERG11.

The protein resides in the endoplasmic reticulum membrane. In terms of biological role, part of the third module of ergosterol biosynthesis pathway that includes the late steps of the pathway. ERG28 has a role as a scaffold to help anchor the catalytic components of the C-4 demethylation complex ERG25, ERG26 and ERG27 to the endoplasmic reticulum. The third module or late pathway involves the ergosterol synthesis itself through consecutive reactions that mainly occur in the endoplasmic reticulum (ER) membrane. Firstly, the squalene synthase ERG9 catalyzes the condensation of 2 farnesyl pyrophosphate moieties to form squalene, which is the precursor of all steroids. Squalene synthase is crucial for balancing the incorporation of farnesyl diphosphate (FPP) into sterol and nonsterol isoprene synthesis. Secondly, the squalene epoxidase ERG1 catalyzes the stereospecific oxidation of squalene to (S)-2,3-epoxysqualene, which is considered to be a rate-limiting enzyme in steroid biosynthesis. Then, the lanosterol synthase ERG7 catalyzes the cyclization of (S)-2,3 oxidosqualene to lanosterol, a reaction that forms the sterol core. In the next steps, lanosterol is transformed to zymosterol through a complex process involving various demethylation, reduction and desaturation reactions. The lanosterol 14-alpha-demethylase ERG11 (also known as CYP51) catalyzes C14-demethylation of lanosterol to produce 4,4'-dimethyl cholesta-8,14,24-triene-3-beta-ol, which is critical for ergosterol biosynthesis. The C-14 reductase ERG24 reduces the C14=C15 double bond of 4,4-dimethyl-cholesta-8,14,24-trienol to produce 4,4-dimethyl-cholesta-8,24-dienol. 4,4-dimethyl-cholesta-8,24-dienol is substrate of the C-4 demethylation complex ERG25-ERG26-ERG27 in which ERG25 catalyzes the three-step monooxygenation required for the demethylation of 4,4-dimethyl and 4alpha-methylsterols, ERG26 catalyzes the oxidative decarboxylation that results in a reduction of the 3-beta-hydroxy group at the C-3 carbon to an oxo group, and ERG27 is responsible for the reduction of the keto group on the C-3. ERG28 has a role as a scaffold to help anchor ERG25, ERG26 and ERG27 to the endoplasmic reticulum and ERG29 regulates the activity of the iron-containing C4-methylsterol oxidase ERG25. Then, the sterol 24-C-methyltransferase ERG6 catalyzes the methyl transfer from S-adenosyl-methionine to the C-24 of zymosterol to form fecosterol. The C-8 sterol isomerase ERG2 catalyzes the reaction which results in unsaturation at C-7 in the B ring of sterols and thus converts fecosterol to episterol. The sterol-C5-desaturase ERG3 then catalyzes the introduction of a C-5 double bond in the B ring to produce 5-dehydroepisterol. The C-22 sterol desaturase ERG5 further converts 5-dehydroepisterol into ergosta-5,7,22,24(28)-tetraen-3beta-ol by forming the C-22(23) double bond in the sterol side chain. Finally, ergosta-5,7,22,24(28)-tetraen-3beta-ol is substrate of the C-24(28) sterol reductase ERG4 to produce ergosterol. The sequence is that of Ergosterol biosynthetic protein 28 from Saccharomyces cerevisiae (strain ATCC 204508 / S288c) (Baker's yeast).